Consider the following 138-residue polypeptide: Dehydratase iacD (138 aa).

The region spanning 18–113 (GVSEEDFIEW…LKDQDVWMDN (96 aa)) is the EthD domain.

Belongs to the tpcK family.

It functions in the pathway secondary metabolite biosynthesis. Dehydratase; part of the gene cluster that mediates the biosynthesis of iso-A82775C, a enylepoxycyclohexane and biosynthetic precursor of the chloropestolide anticancer natural products. Within the cluster, the prenyltransferase iacE prenylates siccayne to generate pestalodiol E, using dimethylallyl diphosphate (DMAPP) as cosubstrate. The probable oxidoreductase iacF is then involved in the epoxidation of pestalodiol F to pestalodiol F, which is further converted to pestalofone A by the short-chain dehydrogenase/reductase iacG. Iso-A82775C is subsequently generated from pestalofone A by the short-chain dehydrogenase/reductase iacC. Iso-A82775C is further condensed with maldoxin via a Diels-Alder reaction to produce the anticancer natural products chloropestolides A to E. This is Dehydratase iacD from Pestalotiopsis fici (strain W106-1 / CGMCC3.15140).